Consider the following 359-residue polypeptide: Alanine racemase (359 aa).

K35 (proton acceptor; specific for D-alanine) is an active-site residue. Residue K35 is modified to N6-(pyridoxal phosphate)lysine. R131 contacts substrate. Y253 acts as the Proton acceptor; specific for L-alanine in catalysis. M301 contributes to the substrate binding site.

It belongs to the alanine racemase family. Requires pyridoxal 5'-phosphate as cofactor.

The enzyme catalyses L-alanine = D-alanine. It functions in the pathway amino-acid biosynthesis; D-alanine biosynthesis; D-alanine from L-alanine: step 1/1. In terms of biological role, catalyzes the interconversion of L-alanine and D-alanine. May also act on other amino acids. The protein is Alanine racemase (alr) of Laribacter hongkongensis (strain HLHK9).